We begin with the raw amino-acid sequence, 453 residues long: MESLRSLSNISALHELLCRYSNLSGTLTWNLSSTNGTHNLTTANWPPWNLNCTPILDRKKPSPSDLNLWVRIVMYSVIFLLSVFGNTLIIIVLVMNKRLRTITNSFLLSLALSDLMVAVLCMPFTLIPNLMENFIFGEVICRAAAYFMGLSVSVSTFNLVAISIERYSAICNPLKSRVWQTRSHAYRVIAATWVLSSIIMIPYLVYNKTVTFPMKDRRVGHQCRLVWPSKQVQQAWYVLLLTILFFIPGVVMIVAYGLISRELYRGIQFEMDLNKEAKAHKNGVSTPTTIPSGDEGDGCYIQVTKRRNTMEMSTLTPSVCTKMDRARINNSEAKLMAKKRVIRMLIVIVAMFFICWMPIFVANTWKAFDELSAFNTLTGAPISFIHLLSYTSACVNPLIYCFMNKRFRKAFLGTFSSCIKPCRNFRDTDEDIAATGASLSKFSYTTVSSLGPA.

Topologically, residues methionine 1–serine 64 are extracellular. Asparagine 9, asparagine 22, asparagine 30, asparagine 35, and asparagine 39 each carry an N-linked (GlcNAc...) asparagine glycan. The chain crosses the membrane as a helical span at residues aspartate 65 to valine 94. Residues methionine 95–asparagine 104 lie on the Cytoplasmic side of the membrane. Residues serine 105 to methionine 131 traverse the membrane as a helical segment. Residues glutamate 132–arginine 142 are Extracellular-facing. Cysteine 141 and cysteine 223 form a disulfide bridge. Residues alanine 143–isoleucine 164 traverse the membrane as a helical segment. Residues glutamate 165 to histidine 184 are Cytoplasmic-facing. A helical transmembrane segment spans residues alanine 185–valine 205. At tyrosine 206–tyrosine 237 the chain is on the extracellular side. Residues valine 238–arginine 261 traverse the membrane as a helical segment. Residues glutamate 262–arginine 343 lie on the Cytoplasmic side of the membrane. The helical transmembrane segment at methionine 344 to threonine 364 threads the bilayer. At tryptophan 365–glycine 379 the chain is on the extracellular side. Residues alanine 380–methionine 403 form a helical membrane-spanning segment. Cysteine 401 is lipidated: S-palmitoyl cysteine. Residues asparagine 404 to alanine 453 lie on the Cytoplasmic side of the membrane.

The protein belongs to the G-protein coupled receptor 1 family. Brain and stomach.

It is found in the cell membrane. Its function is as follows. Receptor for cholecystokinin. This receptor mediates its action by association with G proteins that activate a phosphatidylinositol-calcium second messenger system. Has high affinity for CCK-8 and low affinities for gastrin-17-I, CCK-4, and unsulfated CCK-8. The chain is Cholecystokinin receptor (cckar) from Xenopus laevis (African clawed frog).